A 123-amino-acid chain; its full sequence is Ribonuclease P protein component (123 aa).

Belongs to the RnpA family. As to quaternary structure, consists of a catalytic RNA component (M1 or rnpB) and a protein subunit.

It catalyses the reaction Endonucleolytic cleavage of RNA, removing 5'-extranucleotides from tRNA precursor.. Functionally, RNaseP catalyzes the removal of the 5'-leader sequence from pre-tRNA to produce the mature 5'-terminus. It can also cleave other RNA substrates such as 4.5S RNA. The protein component plays an auxiliary but essential role in vivo by binding to the 5'-leader sequence and broadening the substrate specificity of the ribozyme. The polypeptide is Ribonuclease P protein component (Streptomyces griseus subsp. griseus (strain JCM 4626 / CBS 651.72 / NBRC 13350 / KCC S-0626 / ISP 5235)).